The following is a 1343-amino-acid chain: ABC multidrug transporter atrD (1343 aa).

Residues 1–10 are compositionally biased toward polar residues; the sequence is MSPLETNPLS. The segment at 1 to 67 is disordered; the sequence is MSPLETNPLS…HRPKSSSSNN (67 aa). The span at 20–31 shows a compositional bias: low complexity; sequence ETSTTEEQASTP. Residue asparagine 99 is glycosylated (N-linked (GlcNAc...) asparagine). The next 4 helical transmembrane spans lie at 114–134, 163–183, 235–255, and 263–283; these read ILIM…LPLF, YFVY…VGFI, KVGL…IAYV, and ICSS…QFII. An ABC transmembrane type-1 1 domain is found at 115–403; that stretch reads LIMVISTICA…VSPNAQAFTN (289 aa). Residue asparagine 309 is glycosylated (N-linked (GlcNAc...) asparagine). The next 2 helical transmembrane spans lie at 339-359 and 366-386; these read IVMG…YGLG and FLVD…AILI. In terms of domain architecture, ABC transporter 1 spans 438–683; the sequence is IELRNVKHIY…GGAYRKLVEA (246 aa). 473-480 serves as a coordination point for ATP; that stretch reads GPSGSGKS. A glycan (N-linked (GlcNAc...) asparagine) is linked at asparagine 545. 2 helical membrane-spanning segments follow: residues 773–793 and 820–840; these read MLIG…QAVL and LMFF…GAAF. An ABC transmembrane type-1 2 domain is found at 774 to 1063; that stretch reads LIGLVFSVLA…VFSFAPDMGK (290 aa). Asparagine 872 is a glycosylation site (N-linked (GlcNAc...) asparagine). The next 4 helical transmembrane spans lie at 887-907, 920-942, 1010-1030, and 1037-1057; these read HLSG…TTLG, LALV…FYML, ALVF…LGHH, and FFVC…VFSF. Asparagine 1083 is a glycosylation site (N-linked (GlcNAc...) asparagine). The region spanning 1098-1336 is the ABC transporter 2 domain; it reads IEFRNVHFRY…KGRYYELVNL (239 aa). 1133–1140 contributes to the ATP binding site; it reads GPSGCGKS.

Belongs to the ABC transporter superfamily. ABCB family. Multidrug resistance exporter (TC 3.A.1.201) subfamily.

The protein resides in the cell membrane. Fenamirol efflux transporter activity is inhibited by the cyclosporin derivative PSC 833, nigericin, reserpine and valinomycin. The effect of reserpine is transiant, while that of the cyclosporin derivative PSC 833, nigericin and valinomycin is proportional to the time of exposure. Cyclohexinmide has inhibitory effect only when applied prior to addition of the fungicide. Its function is as follows. Pleiotropic ABC efflux transporter involved in the protection of the cells against a wide range of toxic compounds. Confers resistance to the azole fenarimol via efflux transport. May also be involved in the secretion of penicillin. This is ABC multidrug transporter atrD from Emericella nidulans (strain FGSC A4 / ATCC 38163 / CBS 112.46 / NRRL 194 / M139) (Aspergillus nidulans).